The chain runs to 364 residues: Spermidine/putrescine import ATP-binding protein PotA (364 aa).

The ABC transporter domain maps to 10–244; sequence IEVVNVSKIF…PAERFVADFI (235 aa). 46-53 is an ATP binding site; that stretch reads GPSGCGKT.

It belongs to the ABC transporter superfamily. Spermidine/putrescine importer (TC 3.A.1.11.1) family. As to quaternary structure, the complex is composed of two ATP-binding proteins (PotA), two transmembrane proteins (PotB and PotC) and a solute-binding protein (PotD).

Its subcellular location is the cell inner membrane. It carries out the reaction ATP + H2O + polyamine-[polyamine-binding protein]Side 1 = ADP + phosphate + polyamineSide 2 + [polyamine-binding protein]Side 1.. Functionally, part of the ABC transporter complex PotABCD involved in spermidine/putrescine import. Responsible for energy coupling to the transport system. The chain is Spermidine/putrescine import ATP-binding protein PotA from Mesorhizobium japonicum (strain LMG 29417 / CECT 9101 / MAFF 303099) (Mesorhizobium loti (strain MAFF 303099)).